A 193-amino-acid chain; its full sequence is Flagellar transcriptional regulator FlhC (193 aa).

Zn(2+) is bound by residues Cys137, Cys140, Cys158, and Cys161.

Belongs to the FlhC family. In terms of assembly, heterohexamer composed of two FlhC and four FlhD subunits. Each FlhC binds a FlhD dimer, forming a heterotrimer, and a hexamer assembles by dimerization of two heterotrimers. Zn(2+) serves as cofactor.

It is found in the cytoplasm. In terms of biological role, functions in complex with FlhD as a master transcriptional regulator that regulates transcription of several flagellar and non-flagellar operons by binding to their promoter region. Activates expression of class 2 flagellar genes, including fliA, which is a flagellum-specific sigma factor that turns on the class 3 genes. Also regulates genes whose products function in a variety of physiological pathways. The protein is Flagellar transcriptional regulator FlhC of Pectobacterium carotovorum (Erwinia carotovora).